Reading from the N-terminus, the 383-residue chain is MNTNKKILILTANYGNGHMQVAKTLYDECKSQGFEHVVVSNLYQESNPIVSEVTQYLYLKSFSIGKQFYRLFYYGVDKIYNKRKFNIYLKMGNKRLDELIQLHNPDIIIITFPMIVVPEYRNKTGKIIPTFNVMTDFCLHKIWVHENIDRYYVATDYVKQKLVEIGTHPSDVKVTGIPIRPQFEADVPKSKIYKKYGLSSNKKVLLIMAGAHGVLKNVKELCEALLLDSEVQIVVVCGKNAALKQSLSDLEQTHPDQLKALGYVEQIDELFRVTDCMITKPGGITLTEATALGVPVILYKPVPGQEKENAHFFEDYGAAIVINRHEDILESVTNLLQDEEKLESMKQNMKSLHLKHSSQTILEDIVEQSDLITNNKTYARALS.

It belongs to the glycosyltransferase 28 family. UgtP subfamily.

It localises to the cell membrane. The enzyme catalyses a 1,2-diacyl-3-O-(beta-D-glucopyranosyl)-sn-glycerol + UDP-alpha-D-glucose = a 1,2-diacyl-3-O-(beta-D-Glc-(1-&gt;6)-beta-D-Glc)-sn-glycerol + UDP + H(+). It catalyses the reaction a 1,2-diacyl-3-O-(beta-D-Glc-(1-&gt;6)-beta-D-Glc)-sn-glycerol + UDP-alpha-D-glucose = a 1,2-diacyl-3-O-(beta-D-Glc-(1-&gt;6)-beta-D-Glc-(1-&gt;6)-beta-D-Glc)-sn-glycerol + UDP + H(+). It carries out the reaction a 1,2-diacyl-sn-glycerol + UDP-alpha-D-glucose = a 1,2-diacyl-3-O-(beta-D-glucopyranosyl)-sn-glycerol + UDP + H(+). It functions in the pathway glycolipid metabolism; diglucosyl-diacylglycerol biosynthesis. Functionally, processive glucosyltransferase involved in the biosynthesis of both the bilayer- and non-bilayer-forming membrane glucolipids. Is able to successively transfer up to three glucosyl residues to diacylglycerol (DAG), thereby catalyzing the formation of beta-monoglucosyl-DAG (3-O-(beta-D-glucopyranosyl)-1,2-diacyl-sn-glycerol), beta-diglucosyl-DAG (3-O-(beta-D-glucopyranosyl-beta-(1-&gt;6)-D-glucopyranosyl)-1,2-diacyl-sn-glycerol) and beta-triglucosyl-DAG (3-O-(beta-D-glucopyranosyl-beta-(1-&gt;6)-D-glucopyranosyl-beta-(1-&gt;6)-D-glucopyranosyl)-1,2-diacyl-sn-glycerol). Beta-diglucosyl-DAG is the predominant glycolipid found in Bacillales and is also used as a membrane anchor for lipoteichoic acid (LTA). The sequence is that of Processive diacylglycerol beta-glucosyltransferase from Bacillus pumilus (strain SAFR-032).